We begin with the raw amino-acid sequence, 427 residues long: Adenylosuccinate synthetase (427 aa).

GTP is bound by residues 12–18 (GDEGKGK) and 40–42 (GHT). Aspartate 13 functions as the Proton acceptor in the catalytic mechanism. Aspartate 13 and glycine 40 together coordinate Mg(2+). IMP is bound by residues 13 to 16 (DEGK), 38 to 41 (NAGH), threonine 128, arginine 142, glutamine 223, threonine 238, and arginine 302. Histidine 41 serves as the catalytic Proton donor. 298 to 304 (TTTGRAR) lines the substrate pocket. GTP contacts are provided by residues arginine 304, 330 to 332 (KLD), and 412 to 414 (AVG).

It belongs to the adenylosuccinate synthetase family. Homodimer. Mg(2+) serves as cofactor.

The protein localises to the cytoplasm. It catalyses the reaction IMP + L-aspartate + GTP = N(6)-(1,2-dicarboxyethyl)-AMP + GDP + phosphate + 2 H(+). It functions in the pathway purine metabolism; AMP biosynthesis via de novo pathway; AMP from IMP: step 1/2. Its function is as follows. Plays an important role in the de novo pathway of purine nucleotide biosynthesis. Catalyzes the first committed step in the biosynthesis of AMP from IMP. This chain is Adenylosuccinate synthetase, found in Desulfitobacterium hafniense (strain Y51).